The primary structure comprises 308 residues: GTPase IMAP family member 5 (308 aa).

Residues 1-283 (MEHLQKSTYG…VKSCWSSHTA (283 aa)) are Cytoplasmic-facing. The AIG1-type G domain occupies 24–227 (SSCLRILLVG…HSNDLFLHAE (204 aa)). GTP-binding positions include 33-41 (GKSGCGKSA), Ser54, 151-153 (RKE), and Asn188. A helical; Anchor for type IV membrane protein membrane pass occupies residues 284 to 304 (ACALLIVLGLTLLTTFINLCI). Topologically, residues 305-308 (SRCK) are mitochondrial intermembrane.

It belongs to the TRAFAC class TrmE-Era-EngA-EngB-Septin-like GTPase superfamily. AIG1/Toc34/Toc159-like paraseptin GTPase family. IAN subfamily. As to quaternary structure, interacts with BAD, BAK1, BAX, BCL2, BCL2L1/Bcl-xL and BCL2L11/BimEL. The interaction with BAX is increased, when cells initiate apoptosis upon IL2 withdrawal. Forms a complex with BCL2L1 or MCL1 and HSPA8/HSC70; the interaction between HSPA8 and BCL2L1 or MCL1 is impaired in the absence of GIMAP5. May interact (via N-terminus) with microtubules. In terms of tissue distribution, expressed in thymus (in thymocytes), spleen (in splenocytes), lymph node and lung. Highly expressed in T lymphocytes. Expressed in B cells and in distinct lineages of hematopoietic bone marrow cells, including natural killer, B, T, myeloid and erythroid lineages. Expressed in liver endothelial cells.

The protein resides in the lysosome. Its subcellular location is the lysosome membrane. It localises to the endosome. It is found in the multivesicular body membrane. The protein localises to the endosome membrane. Functionally, plays a role in T lymphocyte development and the optimal generation of CD4/CD8 double-positive thymocytes. Inhibitor of GSK3A. May act by sequestering GSK3A in cytoplasmic vesicles and impairing its translocation to the nucleus. Consequently, impairs GSK3A-dependent transcriptional program and regulation of the DNA damage response occurring during T cells proliferation. Required for the survival of bone marrow hematopoietic stem cells, as well as of peripheral T cells, natural killer (NK) and NK T-cell development and the maintenance of normal liver function. May promote the survival of mature T lymphocytes upon cytokine withdrawal. May regulate Ca(2+) homeostasis by modulating lysosomal Ca(2+) stores, preventing its accumulation in the absence of T cell activation. May play a role in mitochondrial DNA segregation in hematopoietic tissues. Is a regulator of liver endothelial cell homeostasis. This Mus musculus (Mouse) protein is GTPase IMAP family member 5 (Gimap5).